Reading from the N-terminus, the 408-residue chain is Tryptophan synthase beta chain (408 aa).

Lysine 103 is subject to N6-(pyridoxal phosphate)lysine.

The protein belongs to the TrpB family. Tetramer of two alpha and two beta chains. Pyridoxal 5'-phosphate serves as cofactor.

It catalyses the reaction (1S,2R)-1-C-(indol-3-yl)glycerol 3-phosphate + L-serine = D-glyceraldehyde 3-phosphate + L-tryptophan + H2O. The protein operates within amino-acid biosynthesis; L-tryptophan biosynthesis; L-tryptophan from chorismate: step 5/5. Its function is as follows. The beta subunit is responsible for the synthesis of L-tryptophan from indole and L-serine. This is Tryptophan synthase beta chain from Koribacter versatilis (strain Ellin345).